We begin with the raw amino-acid sequence, 510 residues long: Glutamate decarboxylase (510 aa).

107–109 contacts substrate; the sequence is QLS. K322 is modified (N6-(pyridoxal phosphate)lysine). Substrate is bound at residue R483.

It belongs to the group II decarboxylase family. In terms of assembly, homodimer. Pyridoxal 5'-phosphate serves as cofactor. Expressed in the head (at protein level).

The catalysed reaction is L-glutamate + H(+) = 4-aminobutanoate + CO2. Functionally, catalyzes the production of GABA. The chain is Glutamate decarboxylase (Gad1) from Drosophila melanogaster (Fruit fly).